We begin with the raw amino-acid sequence, 275 residues long: Dermonecrotic toxin SpeSicTox-betaIIA1 (275 aa).

The active site involves H5. Mg(2+) contacts are provided by E25 and D27. H41 acts as the Nucleophile in catalysis. 2 disulfides stabilise this stretch: C45–C51 and C47–C190. Position 85 (D85) interacts with Mg(2+).

Belongs to the arthropod phospholipase D family. Class II subfamily. Mg(2+) is required as a cofactor. As to expression, expressed by the venom gland.

It localises to the secreted. It carries out the reaction an N-(acyl)-sphingosylphosphocholine = an N-(acyl)-sphingosyl-1,3-cyclic phosphate + choline. It catalyses the reaction an N-(acyl)-sphingosylphosphoethanolamine = an N-(acyl)-sphingosyl-1,3-cyclic phosphate + ethanolamine. The catalysed reaction is a 1-acyl-sn-glycero-3-phosphocholine = a 1-acyl-sn-glycero-2,3-cyclic phosphate + choline. The enzyme catalyses a 1-acyl-sn-glycero-3-phosphoethanolamine = a 1-acyl-sn-glycero-2,3-cyclic phosphate + ethanolamine. In terms of biological role, dermonecrotic toxins cleave the phosphodiester linkage between the phosphate and headgroup of certain phospholipids (sphingolipid and lysolipid substrates), forming an alcohol (often choline) and a cyclic phosphate. This toxin acts on sphingomyelin (SM). It may also act on ceramide phosphoethanolamine (CPE), lysophosphatidylcholine (LPC) and lysophosphatidylethanolamine (LPE), but not on lysophosphatidylserine (LPS), and lysophosphatidylglycerol (LPG). It acts by transphosphatidylation, releasing exclusively cyclic phosphate products as second products. Induces dermonecrosis, hemolysis, increased vascular permeability, edema, inflammatory response, and platelet aggregation. In Sicarius peruensis (Six-eyed sand spider), this protein is Dermonecrotic toxin SpeSicTox-betaIIA1.